Consider the following 456-residue polypeptide: UDP-N-acetylmuramate--L-alanine ligase (456 aa).

Residue 112–118 (GAHGKTT) coordinates ATP.

Belongs to the MurCDEF family.

It is found in the cytoplasm. It catalyses the reaction UDP-N-acetyl-alpha-D-muramate + L-alanine + ATP = UDP-N-acetyl-alpha-D-muramoyl-L-alanine + ADP + phosphate + H(+). It participates in cell wall biogenesis; peptidoglycan biosynthesis. Functionally, cell wall formation. This is UDP-N-acetylmuramate--L-alanine ligase from Desulfatibacillum aliphaticivorans.